The primary structure comprises 291 residues: NAD kinase (291 aa).

Asp73 serves as the catalytic Proton acceptor. Residues 73-74 (DG), 147-148 (ND), Arg175, Asp177, and Gln246 each bind NAD(+).

The protein belongs to the NAD kinase family. Requires a divalent metal cation as cofactor.

The protein localises to the cytoplasm. The catalysed reaction is NAD(+) + ATP = ADP + NADP(+) + H(+). In terms of biological role, involved in the regulation of the intracellular balance of NAD and NADP, and is a key enzyme in the biosynthesis of NADP. Catalyzes specifically the phosphorylation on 2'-hydroxyl of the adenosine moiety of NAD to yield NADP. The protein is NAD kinase of Chromobacterium violaceum (strain ATCC 12472 / DSM 30191 / JCM 1249 / CCUG 213 / NBRC 12614 / NCIMB 9131 / NCTC 9757 / MK).